Reading from the N-terminus, the 113-residue chain is uncharacterized protein (113 aa).

This sequence belongs to the Lactobacillus delbrueckii bacteriophages ORF5 protein family.

This is an uncharacterized protein from Lactobacillus delbrueckii (Lactococcus delbrueckii bacteriophage mv4).